The primary structure comprises 395 residues: uncharacterized protein (395 aa).

Disordered regions lie at residues 17–155 (EVKK…QVKT) and 276–304 (EERE…HEQK). Composition is skewed to polar residues over residues 42–71 (DGNN…SNVV) and 81–96 (GDAS…NVVK). Residues 103 to 133 (VAEKPEKEDLAVIESEDKAAKPDGEIKKNVE) show a composition bias toward basic and acidic residues. Over residues 134 to 143 (TEVTSRSTSS) the composition is skewed to low complexity. 2 stretches are compositionally biased toward basic and acidic residues: residues 144–155 (QEKDELEKQVKT) and 276–290 (EERE…KEQS). Residues 224–351 (LKMNGKEDDL…QRRLKELEAM (128 aa)) are a coiled coil. A compositionally biased stretch (polar residues) spans 291–300 (SEGSKTANQT).

The protein localises to the cytoplasm. This is an uncharacterized protein from Schizosaccharomyces pombe (strain 972 / ATCC 24843) (Fission yeast).